Here is a 318-residue protein sequence, read N- to C-terminus: MTKRHLLSAGDLTRDDATAILDDADRFREALLGREVKKLPTLRGRTIITMFYENSTRTRVSFEVAGKWMSADVINVSASGSSVAKGESLRDTALTLRAAGADALIIRHPASGAAQQLAEWTVEEDGGGPSVINAGDGTHEHPTQALLDALTIRQRLGSVEGKRVVIVGDVLHSRVARSNVTLLHTLGAEVVLVSPPTLLPRGVENWPVTVSYDLDAELPAADAVLMLRVQAERMNGSFFPSAREYSVRYGLSEKRQAMLPDRAIVLHPGPMVRGMEISFPVADSPQSAVLQQVSNGVHVRMAVLFHLLVGADREAINV.

Carbamoyl phosphate-binding residues include R57 and T58. K85 lines the L-aspartate pocket. 3 residues coordinate carbamoyl phosphate: R107, H141, and Q144. The L-aspartate site is built by R174 and R228. The carbamoyl phosphate site is built by G269 and P270.

Belongs to the aspartate/ornithine carbamoyltransferase superfamily. ATCase family. As to quaternary structure, heterododecamer (2C3:3R2) of six catalytic PyrB chains organized as two trimers (C3), and six regulatory PyrI chains organized as three dimers (R2).

It carries out the reaction carbamoyl phosphate + L-aspartate = N-carbamoyl-L-aspartate + phosphate + H(+). Its pathway is pyrimidine metabolism; UMP biosynthesis via de novo pathway; (S)-dihydroorotate from bicarbonate: step 2/3. In terms of biological role, catalyzes the condensation of carbamoyl phosphate and aspartate to form carbamoyl aspartate and inorganic phosphate, the committed step in the de novo pyrimidine nucleotide biosynthesis pathway. The polypeptide is Aspartate carbamoyltransferase catalytic subunit (Mycolicibacterium smegmatis (strain ATCC 700084 / mc(2)155) (Mycobacterium smegmatis)).